Here is a 331-residue protein sequence, read N- to C-terminus: Aromatic 2-oxoacid reductase (331 aa).

Residues 154-155 (RI), Asp175, 205-206 (AP), Asn211, 232-234 (AAR), and Asp258 contribute to the NAD(+) site. Arg234 is a catalytic residue. Glu263 is an active-site residue. Catalysis depends on His295, which acts as the Proton donor.

It belongs to the D-isomer specific 2-hydroxyacid dehydrogenase family.

It carries out the reaction (R)-3-phenyllactate + NAD(+) = 3-phenylpyruvate + NADH + H(+). It catalyses the reaction (2R)-2-hydroxy-3-(4-hydroxyphenyl)propanoate + NAD(+) = 3-(4-hydroxyphenyl)pyruvate + NADH + H(+). The enzyme catalyses 3-(indol-3-yl)lactate + NAD(+) = indole-3-pyruvate + NADH + H(+). Its pathway is amino-acid degradation. Functionally, essential for the reductive metabolism of L-phenylalanine, L-tyrosine and L-tryptophan. Catalyzes the conversion of phenylpyruvic acid to phenyllactic acid, 4-hydroxy-phenylpyruvic acid to 4-hydroxy-phenyllactic acid, and indolepyruvic acid to indolelactic acid. The sequence is that of Aromatic 2-oxoacid reductase from Clostridium sporogenes (strain ATCC 7955 / DSM 767 / NBRC 16411 / NCIMB 8053 / NCTC 8594 / PA 3679).